Consider the following 274-residue polypeptide: Large ribosomal subunit protein uL2cz/uL2cy (274 aa).

The tract at residues 224–274 (NPVDHPHGGGEGRAPIGRKKPATPWGYPALGRRSRKRNKYSDNLILRRRSK) is disordered.

It belongs to the universal ribosomal protein uL2 family. As to quaternary structure, part of the 50S ribosomal subunit.

The protein resides in the plastid. Its subcellular location is the chloroplast. The sequence is that of Large ribosomal subunit protein uL2cz/uL2cy (rpl2-A) from Morus indica (Mulberry).